Here is a 389-residue protein sequence, read N- to C-terminus: MQTLDQLDVNGKRVLVRVDYNVPIKDGVVQDETRVTASLPTLQHLLARGAALVLLSHLGRPKNGPEEKYSLRPVAAVLERALGRPVKFIASLPSSEETRRAVESLQPGEVALLENVRFEPGEEKNDPELVEQLARLGDAFVLDAFGSAHRAHASVSGVAGRLPHAAGLLLHNEVEALSRLLHDPARPYVVIIGGAKVSDKIKVIENLLPRVDRMLIGGGMMFTFIRARGGQIGNSLVEEDQVAYARQLLEQYGDRLMLPTDAVAADRFAPDAQTRVVPADRIPDGWMGLDIGPETARAYAEALQGAKTVFWNGPMGVFEFPAFAAGTNAVAQAVAELGNQAYTVVGGGDSVSAINQSGQASKVSHISTGGGASLELLEGQLLPGVEAMK.

Substrate contacts are provided by residues 19–21 (DYN), Arg34, 57–60 (HLGR), Arg117, and Arg150. ATP contacts are provided by residues Lys200, Gly288, Glu319, and 347–350 (GGDS).

Belongs to the phosphoglycerate kinase family. As to quaternary structure, monomer.

The protein resides in the cytoplasm. The enzyme catalyses (2R)-3-phosphoglycerate + ATP = (2R)-3-phospho-glyceroyl phosphate + ADP. Its pathway is carbohydrate degradation; glycolysis; pyruvate from D-glyceraldehyde 3-phosphate: step 2/5. The sequence is that of Phosphoglycerate kinase from Deinococcus geothermalis (strain DSM 11300 / CIP 105573 / AG-3a).